We begin with the raw amino-acid sequence, 619 residues long: Dihydroxy-acid dehydratase (619 aa).

D81 is a Mg(2+) binding site. Residue C122 coordinates [2Fe-2S] cluster. Residues D123 and K124 each coordinate Mg(2+). An N6-carboxylysine modification is found at K124. Position 195 (C195) interacts with [2Fe-2S] cluster. E494 serves as a coordination point for Mg(2+). Catalysis depends on S520, which acts as the Proton acceptor.

Belongs to the IlvD/Edd family. In terms of assembly, homodimer. Requires [2Fe-2S] cluster as cofactor. Mg(2+) is required as a cofactor.

It catalyses the reaction (2R)-2,3-dihydroxy-3-methylbutanoate = 3-methyl-2-oxobutanoate + H2O. It carries out the reaction (2R,3R)-2,3-dihydroxy-3-methylpentanoate = (S)-3-methyl-2-oxopentanoate + H2O. Its pathway is amino-acid biosynthesis; L-isoleucine biosynthesis; L-isoleucine from 2-oxobutanoate: step 3/4. The protein operates within amino-acid biosynthesis; L-valine biosynthesis; L-valine from pyruvate: step 3/4. Functions in the biosynthesis of branched-chain amino acids. Catalyzes the dehydration of (2R,3R)-2,3-dihydroxy-3-methylpentanoate (2,3-dihydroxy-3-methylvalerate) into 2-oxo-3-methylpentanoate (2-oxo-3-methylvalerate) and of (2R)-2,3-dihydroxy-3-methylbutanoate (2,3-dihydroxyisovalerate) into 2-oxo-3-methylbutanoate (2-oxoisovalerate), the penultimate precursor to L-isoleucine and L-valine, respectively. This Shewanella sp. (strain MR-4) protein is Dihydroxy-acid dehydratase.